The following is a 335-amino-acid chain: Biotin synthase (335 aa).

In terms of domain architecture, Radical SAM core spans Val-53 to Arg-276. Cys-66, Cys-70, and Cys-73 together coordinate [4Fe-4S] cluster. [2Fe-2S] cluster-binding residues include Cys-109, Cys-142, Cys-201, and Arg-271.

Belongs to the radical SAM superfamily. Biotin synthase family. Homodimer. [4Fe-4S] cluster serves as cofactor. [2Fe-2S] cluster is required as a cofactor.

It catalyses the reaction (4R,5S)-dethiobiotin + (sulfur carrier)-SH + 2 reduced [2Fe-2S]-[ferredoxin] + 2 S-adenosyl-L-methionine = (sulfur carrier)-H + biotin + 2 5'-deoxyadenosine + 2 L-methionine + 2 oxidized [2Fe-2S]-[ferredoxin]. Its pathway is cofactor biosynthesis; biotin biosynthesis; biotin from 7,8-diaminononanoate: step 2/2. Its function is as follows. Catalyzes the conversion of dethiobiotin (DTB) to biotin by the insertion of a sulfur atom into dethiobiotin via a radical-based mechanism. The sequence is that of Biotin synthase from Acidothermus cellulolyticus (strain ATCC 43068 / DSM 8971 / 11B).